The primary structure comprises 479 residues: Protein TRIGALACTOSYLDIACYLGLYCEROL 4, chloroplastic (479 aa).

Residues 288-310 are membrane-embedded; that stretch reads VFLSSPHVAVSGIIGSVMTAAFG.

Homodimer. Forms dimeric beta-barrel. Interacts with TGD5.

It localises to the plastid. It is found in the chloroplast outer membrane. The protein localises to the endoplasmic reticulum. Its function is as follows. Involved in lipid transfer from the endoplasmic reticulum (ER) to plastids. Specifically binds phosphatidic acid (PtdOH). The sequence is that of Protein TRIGALACTOSYLDIACYLGLYCEROL 4, chloroplastic from Arabidopsis thaliana (Mouse-ear cress).